Consider the following 281-residue polypeptide: Undecaprenyl-diphosphatase (281 aa).

8 consecutive transmembrane segments (helical) span residues 2 to 22, 46 to 66, 93 to 113, 115 to 135, 152 to 172, 190 to 210, 228 to 248, and 259 to 279; these read FDLIKAIIIGIIEGLTEFLPV, AFSSVFDYSIQLGAIFAVIQL, VIVGVLPAIVFGFALNDFMDA, LMNFWVVSATLIIYGIAFIVI, ITFKLALYIGLFQVLSIVPGT, FVAAEFSFFLSIPVMFGVTFL, IVMLVGFIVSWIVAWFAIKFM, and VFGYYRIIIGAIFLVFGILGI.

It belongs to the UppP family.

The protein localises to the cell membrane. The enzyme catalyses di-trans,octa-cis-undecaprenyl diphosphate + H2O = di-trans,octa-cis-undecaprenyl phosphate + phosphate + H(+). Catalyzes the dephosphorylation of undecaprenyl diphosphate (UPP). Confers resistance to bacitracin. This chain is Undecaprenyl-diphosphatase, found in Leuconostoc mesenteroides subsp. mesenteroides (strain ATCC 8293 / DSM 20343 / BCRC 11652 / CCM 1803 / JCM 6124 / NCDO 523 / NBRC 100496 / NCIMB 8023 / NCTC 12954 / NRRL B-1118 / 37Y).